Here is a 432-residue protein sequence, read N- to C-terminus: Serine--tRNA ligase (432 aa).

238–240 (TAE) serves as a coordination point for L-serine. Residue 269–271 (RSE) participates in ATP binding. Residue Glu292 coordinates L-serine. 356–359 (EVSS) provides a ligand contact to ATP. Ser392 is an L-serine binding site.

The protein belongs to the class-II aminoacyl-tRNA synthetase family. Type-1 seryl-tRNA synthetase subfamily. Homodimer. The tRNA molecule binds across the dimer.

The protein resides in the cytoplasm. The catalysed reaction is tRNA(Ser) + L-serine + ATP = L-seryl-tRNA(Ser) + AMP + diphosphate + H(+). It carries out the reaction tRNA(Sec) + L-serine + ATP = L-seryl-tRNA(Sec) + AMP + diphosphate + H(+). Its pathway is aminoacyl-tRNA biosynthesis; selenocysteinyl-tRNA(Sec) biosynthesis; L-seryl-tRNA(Sec) from L-serine and tRNA(Sec): step 1/1. In terms of biological role, catalyzes the attachment of serine to tRNA(Ser). Is also able to aminoacylate tRNA(Sec) with serine, to form the misacylated tRNA L-seryl-tRNA(Sec), which will be further converted into selenocysteinyl-tRNA(Sec). The sequence is that of Serine--tRNA ligase from Buchnera aphidicola subsp. Baizongia pistaciae (strain Bp).